Reading from the N-terminus, the 155-residue chain is Ribosomal RNA large subunit methyltransferase H (155 aa).

S-adenosyl-L-methionine-binding positions include Leu-72, Gly-104, and 123-128 (LAKITL).

Belongs to the RNA methyltransferase RlmH family. Homodimer.

The protein resides in the cytoplasm. It catalyses the reaction pseudouridine(1915) in 23S rRNA + S-adenosyl-L-methionine = N(3)-methylpseudouridine(1915) in 23S rRNA + S-adenosyl-L-homocysteine + H(+). Functionally, specifically methylates the pseudouridine at position 1915 (m3Psi1915) in 23S rRNA. The chain is Ribosomal RNA large subunit methyltransferase H from Mycoplasma capricolum subsp. capricolum (strain California kid / ATCC 27343 / NCTC 10154).